Reading from the N-terminus, the 370-residue chain is MSLHQFLLEPISCHAWNKDLTQIAISPNNHEVHIYKKSGDQWVKGHELKEHNGHITGIDWAPKSDRIVTCGADRNAYVWSQKDGVWKPTLVILRINRAATFVKWSPLENKFAVGSGARLISVCYFESENDWWVSKHIKKPIRSTVLSLDWHPNNVLLAAGSCDFKTRVFSAYIKEVDEKPASTPWGSKMPFGQMMAEFGGVSSGGWVHSVSFSASGNKLAWVSHDSTVSVADASKNMSVSQLKTEFLPLLSVIFVSENSLIAAGHDCCPMLFTYDEHGSLTFVSKLDIPKQSTQRNISAMERFRNMDKRATTEDRNTTLETLHQNSITQVSIYDGDKTECRKFCTTGIDGAMTIWDFKTLESYIQGLKIM.

WD repeat units lie at residues phenylalanine 6–glycine 45, glutamate 50–threonine 89, proline 140–lysine 179, serine 202–glutamine 241, threonine 244–serine 284, and leucine 322–glutamine 365.

The protein belongs to the WD repeat ARPC1 family. Component of the Arp2/3 complex.

It is found in the cytoplasm. The protein resides in the cytoskeleton. It localises to the nucleus. In terms of biological role, probably functions as a component of the Arp2/3 complex which is involved in regulation of actin polymerization and together with an activating nucleation-promoting factor (NPF) mediates the formation of branched actin networks. In addition to its role in the cytoplasmic cytoskeleton, the Arp2/3 complex also promotes actin polymerization in the nucleus, thereby regulating gene transcription and repair of damaged DNA. In Xenopus laevis (African clawed frog), this protein is Actin-related protein 2/3 complex subunit 1A-A (arpc1a-a).